The sequence spans 373 residues: Transcription factor bHLH87 (373 aa).

Residues 127-227 (SAESENREIT…GGSSNISFQH (101 aa)) are disordered. A compositionally biased stretch (basic and acidic residues) spans 188-218 (PQDDSEKGGFKLIYDENQSKSKKPRTEKERG). A bHLH domain is found at 275–324 (ISTDPQTVAARQRRERISEKIRVLQTLVPGGTKMDTASMLDEAANYLKFL).

As to quaternary structure, homodimer. Flowers.

It is found in the nucleus. The polypeptide is Transcription factor bHLH87 (BHLH87) (Arabidopsis thaliana (Mouse-ear cress)).